The primary structure comprises 385 residues: Putative actin-25 (385 aa).

The protein belongs to the actin family.

Its subcellular location is the cytoplasm. The protein resides in the cytoskeleton. It carries out the reaction ATP + H2O = ADP + phosphate + H(+). Functionally, actins are highly conserved proteins that are involved in various types of cell motility and are ubiquitously expressed in all eukaryotic cells. Multiple isoforms are involved in various cellular functions such as cytoskeleton structure, cell mobility, chromosome movement and muscle contraction. The polypeptide is Putative actin-25 (act25) (Dictyostelium discoideum (Social amoeba)).